Here is a 537-residue protein sequence, read N- to C-terminus: MIYTLTRGSLLGSTCKLRYSSLFSYLSTAALRLGFENPTNGNPMDNSSHHIGYVNGFNGGEQSLGGFQQNSYEQSLNPVSGQNPTNRFYQNGYNRNQSYGEHSEIINQRNQNWQSSDGCSSYGTTGNGVPQENNTGGNHFQQDHSGHSSLDELDSICREGKVKKAVEIIKSWRNEGYVVDLPRLFWIAQLCGDAQALQEAKVVHEFITSSVGISDISAYNSIIEMYSGCGSVEDALTVFNSMPERNLETWCGVIRCFAKNGQGEDAIDTFSRFKQEGNKPDGEMFKEIFFACGVLGDMNEGLLHFESMYKEYGIIPCMEHYVSLVKMLAEPGYLDEALRFVESMEPNVDLWETLMNLSRVHGDLILGDRCQDMVEQLDASRLNKESKAGLVPVKSSDLVKEKLQRMAKGPNYGIRYMAAGDISRPENRELYMALKSLKEHMIEIGYVPLSKLALHDVDQESKDENLFNHNERFAFISTFLDTPARSLIRVMKNLRVCADCHNALKLMSKIVGRELISRDAKRFHHMKDGVCSCREYW.

The transit peptide at Met1–Asn110 directs the protein to the mitochondrion. Polar residues predominate over residues Trp113 to Phe140. Residues Trp113–Ser148 are disordered. PPR repeat units lie at residues Ser145 to Val179, Asp180 to Ser210, Asp215 to Thr249, Trp250 to Pro280, Asp281 to Pro316, and Cys317 to Asn347. Residues Tyr412 to Ile442 are type E(+) motif. Residues Glu443–Trp537 are type DYW motif.

This sequence belongs to the PPR family. PCMP-H subfamily.

The protein resides in the mitochondrion. This chain is Pentatricopeptide repeat-containing protein At4g32450, mitochondrial (PCMP-H63), found in Arabidopsis thaliana (Mouse-ear cress).